The following is a 265-amino-acid chain: Tryptophan 2,3-dioxygenase (265 aa).

Substrate-binding positions include 38–42 (FIVVH) and R104. H223 lines the heme pocket. T237 contributes to the substrate binding site.

It belongs to the tryptophan 2,3-dioxygenase family. In terms of assembly, homotetramer. Requires heme as cofactor.

It carries out the reaction L-tryptophan + O2 = N-formyl-L-kynurenine. The protein operates within amino-acid degradation; L-tryptophan degradation via kynurenine pathway; L-kynurenine from L-tryptophan: step 1/2. In terms of biological role, heme-dependent dioxygenase that catalyzes the oxidative cleavage of the L-tryptophan (L-Trp) pyrrole ring and converts L-tryptophan to N-formyl-L-kynurenine. Catalyzes the oxidative cleavage of the indole moiety. The chain is Tryptophan 2,3-dioxygenase from Anaeromyxobacter sp. (strain K).